A 338-amino-acid polypeptide reads, in one-letter code: Tetraacyldisaccharide 4'-kinase (338 aa).

Thr-63–Thr-70 serves as a coordination point for ATP.

It belongs to the LpxK family.

It carries out the reaction a lipid A disaccharide + ATP = a lipid IVA + ADP + H(+). It functions in the pathway glycolipid biosynthesis; lipid IV(A) biosynthesis; lipid IV(A) from (3R)-3-hydroxytetradecanoyl-[acyl-carrier-protein] and UDP-N-acetyl-alpha-D-glucosamine: step 6/6. In terms of biological role, transfers the gamma-phosphate of ATP to the 4'-position of a tetraacyldisaccharide 1-phosphate intermediate (termed DS-1-P) to form tetraacyldisaccharide 1,4'-bis-phosphate (lipid IVA). The chain is Tetraacyldisaccharide 4'-kinase from Hahella chejuensis (strain KCTC 2396).